The primary structure comprises 912 residues: Coatomer subunit beta (912 aa).

HEAT repeat units lie at residues 59-96 (PIPQLLMPIILYVMPSNDHTIKKLLLIYWEVIEKTHLG), 100-135 (SEMILVCNSLLNDLNHPNEFVRGSTLRFLCKLREAE), 136-172 (VLEPLVPSVRSNLENRHAYCRRNAVLAIYNIYSHFDY), 244-281 (SERSKYIKCIFTLLNSSSPAVKYESAGTLLSLSSAPTA), 300-337 (NVKMIVLDKLIEIKKNHSKIMEELVMDILRALSSPNID), 339-375 (CKKVLNIVLDSVTPKNIDEIILFLKKEINKTQSKEFD), 397-434 (EVLGNVVPLLMEYLGDSYLPSAVDVVIFLREVVETYPS), 441-479 (KKLIENLSSIKVSKVYRVAVWVIAEYVTCLEDLQYAMTS), 550-575 (LKAQVMMIISVLINLSKASQVSTSKS), and 576-612 (AYERMLSCIQVLIDSNATIKKIWLQDCRDSFANYLKY).

As to quaternary structure, oligomeric complex that consists of at least the alpha, beta, beta', gamma, delta, epsilon and zeta subunits.

The protein resides in the cytoplasm. It localises to the golgi apparatus membrane. It is found in the cytoplasmic vesicle. The protein localises to the COPI-coated vesicle membrane. In terms of biological role, the coatomer is a cytosolic protein complex that binds to dilysine motifs and reversibly associates with Golgi non-clathrin-coated vesicles, which further mediate biosynthetic protein transport from the ER, via the Golgi up to the trans Golgi network. Coatomer complex is required for budding from Golgi membranes, and is essential for the retrograde Golgi-to-ER transport of dilysine-tagged proteins. This Dictyostelium discoideum (Social amoeba) protein is Coatomer subunit beta (copb).